A 525-amino-acid polypeptide reads, in one-letter code: Glutamate--cysteine ligase (525 aa).

The protein belongs to the glutamate--cysteine ligase type 1 family. Type 1 subfamily.

The catalysed reaction is L-cysteine + L-glutamate + ATP = gamma-L-glutamyl-L-cysteine + ADP + phosphate + H(+). It functions in the pathway sulfur metabolism; glutathione biosynthesis; glutathione from L-cysteine and L-glutamate: step 1/2. The polypeptide is Glutamate--cysteine ligase (Hahella chejuensis (strain KCTC 2396)).